A 188-amino-acid chain; its full sequence is Elongation factor P-like protein (188 aa).

This sequence belongs to the elongation factor P family.

This Xanthomonas euvesicatoria pv. vesicatoria (strain 85-10) (Xanthomonas campestris pv. vesicatoria) protein is Elongation factor P-like protein.